The primary structure comprises 193 residues: Ion-translocating oxidoreductase complex subunit A (193 aa).

The next 6 helical transmembrane spans lie at 4-24, 39-59, 71-91, 102-122, 134-154, and 167-187; these read FFFI…KFLG, IGMG…SWMV, FLRI…IEVV, ALGI…VALL, LLYG…FAGM, and FAGA…FMGF.

Belongs to the NqrDE/RnfAE family. As to quaternary structure, the complex is composed of six subunits: RnfA, RnfB, RnfC, RnfD, RnfE and RnfG.

It localises to the cellular chromatophore membrane. Part of a membrane-bound complex that couples electron transfer with translocation of ions across the membrane. The protein is Ion-translocating oxidoreductase complex subunit A of Cereibacter sphaeroides (strain ATCC 17029 / ATH 2.4.9) (Rhodobacter sphaeroides).